We begin with the raw amino-acid sequence, 436 residues long: C4-dicarboxylate transport protein 2 (436 aa).

Transmembrane regions (helical) follow at residues 14–34 (VLVA…TAVA), 45–65 (LIKM…IAGM), 77–97 (MALL…LVVV), 142–162 (VVGA…VLFG), 198–218 (PIGA…GSLV), 223–243 (LMLC…GGIA), 290–310 (VVGL…SIYL), 331–351 (ITLL…TGSG), and 353–373 (IVLA…LALI). The tract at residues 414-436 (ELAGEGNASSPASDIPVGGREAV) is disordered.

This sequence belongs to the dicarboxylate/amino acid:cation symporter (DAACS) (TC 2.A.23) family.

It localises to the cell inner membrane. Responsible for the transport of dicarboxylates such as succinate, fumarate, and malate from the periplasm across the membrane. The polypeptide is C4-dicarboxylate transport protein 2 (Pseudomonas paraeruginosa (strain DSM 24068 / PA7) (Pseudomonas aeruginosa (strain PA7))).